The primary structure comprises 501 residues: Phenylalanine--tRNA ligase alpha subunit (501 aa).

Thr340 and Phe423 together coordinate L-phenylalanine. Position 425 (Glu425) interacts with Mg(2+). Phe448 provides a ligand contact to L-phenylalanine.

Belongs to the class-II aminoacyl-tRNA synthetase family. Phe-tRNA synthetase alpha subunit type 2 subfamily. In terms of assembly, tetramer of two alpha and two beta subunits. The cofactor is Mg(2+).

It localises to the cytoplasm. The enzyme catalyses tRNA(Phe) + L-phenylalanine + ATP = L-phenylalanyl-tRNA(Phe) + AMP + diphosphate + H(+). The sequence is that of Phenylalanine--tRNA ligase alpha subunit from Methanococcus maripaludis (strain C7 / ATCC BAA-1331).